Here is a 102-residue protein sequence, read N- to C-terminus: Small ribosomal subunit protein uS10 (102 aa).

This sequence belongs to the universal ribosomal protein uS10 family. As to quaternary structure, part of the 30S ribosomal subunit.

Its function is as follows. Involved in the binding of tRNA to the ribosomes. The chain is Small ribosomal subunit protein uS10 from Caldanaerobacter subterraneus subsp. tengcongensis (strain DSM 15242 / JCM 11007 / NBRC 100824 / MB4) (Thermoanaerobacter tengcongensis).